Reading from the N-terminus, the 106-residue chain is MKVLVVVALLVTLISYSSSEGIDDLEADELLSLMANEQTRKECIPKHHECTSNKHGCCRGHLFKYKCQCTTVVTQSGEETEGCFCGTPPHHKAAELVVGFGKKIFG.

A signal peptide spans M1–S19. The propeptide occupies E20–R40. 4 cysteine pairs are disulfide-bonded: C43-C58, C50-C67, C57-C85, and C69-C83.

This sequence belongs to the neurotoxin 19 (CSTX) family. 03 subfamily. In terms of tissue distribution, expressed by the venom gland.

The protein resides in the secreted. This is U1-lycotoxin-Ls1z from Lycosa singoriensis (Wolf spider).